We begin with the raw amino-acid sequence, 330 residues long: MKKGTDLLKKGFAKMVKHGVVMDVTNVEQAQIAEEAGAVAVMALERVPADIRAAGGVARMSDPALIEEIMDAVSIPVMAKCRIGHTTEALVLEAIGVDMIDESEVLTQADPFFHIYKKKFNVPFVCGARNLGEAVRRIWEGAAMIRTKGEAGTGNIVEAVRHMRLMNEAIAQLQRMTDEEVYGVAKFYANRYAELAKTVREGMGLPATVLENEPIYEGFTLAEIIDGLYEVLLEVKKLGRLPVVNFAAGGVATPADAALMMQLGSDGVFVGSGIFKSENPLERARAIVEATYNYDKPDIVAEVSKNLGEAMKGIDITQISEAEKMQYRGD.

Asp23 contacts D-ribose 5-phosphate. The active-site Schiff-base intermediate with D-ribose 5-phosphate is Lys80. Residue Gly152 coordinates D-ribose 5-phosphate. Arg164 contacts D-glyceraldehyde 3-phosphate. D-ribose 5-phosphate is bound by residues Gly250 and 271 to 272; that span reads GS.

This sequence belongs to the PdxS/SNZ family. In terms of assembly, in the presence of PdxT, forms a dodecamer of heterodimers.

The enzyme catalyses aldehydo-D-ribose 5-phosphate + D-glyceraldehyde 3-phosphate + L-glutamine = pyridoxal 5'-phosphate + L-glutamate + phosphate + 3 H2O + H(+). It participates in cofactor biosynthesis; pyridoxal 5'-phosphate biosynthesis. Catalyzes the formation of pyridoxal 5'-phosphate from ribose 5-phosphate (RBP), glyceraldehyde 3-phosphate (G3P) and ammonia. The ammonia is provided by the PdxT subunit. Can also use ribulose 5-phosphate and dihydroxyacetone phosphate as substrates, resulting from enzyme-catalyzed isomerization of RBP and G3P, respectively. The sequence is that of Pyridoxal 5'-phosphate synthase subunit PdxS from Methanocaldococcus jannaschii (strain ATCC 43067 / DSM 2661 / JAL-1 / JCM 10045 / NBRC 100440) (Methanococcus jannaschii).